Here is a 235-residue protein sequence, read N- to C-terminus: Ribitol-5-phosphate cytidylyltransferase (235 aa).

Residues Leu-7–Gly-10, Gly-82–Ser-88, and Ser-113 each bind CTP.

This sequence belongs to the IspD/TarI cytidylyltransferase family. TarI subfamily.

The enzyme catalyses D-ribitol 5-phosphate + CTP + H(+) = CDP-L-ribitol + diphosphate. It participates in cell wall biogenesis; poly(ribitol phosphate) teichoic acid biosynthesis. In terms of biological role, catalyzes the transfer of the cytidylyl group of CTP to D-ribitol 5-phosphate. The polypeptide is Ribitol-5-phosphate cytidylyltransferase (Streptococcus pneumoniae (strain CGSP14)).